Here is a 136-residue protein sequence, read N- to C-terminus: HetP-like commitment protein Alr2902 (136 aa).

The segment covering 94-109 (KASTQDLNQSNNSDYL) has biased composition (polar residues). The tract at residues 94-120 (KASTQDLNQSNNSDYLTTPEPDKRGNI) is disordered.

It belongs to the HetP family. In terms of assembly, in bacterial two-hybrid assays interacts robustly with HetR and Alr3234 and weakly with itself, HetP and Asl1930.

Its function is as follows. Delays heterocyst differentiation and commitment when nitrogen is limiting. Interplay between the 4 HetP paralogs controls the timing of commitment to heterocyst formation and its duration. Epistatic analysis show that the 3 paralogs act upstream of hetP to delay commitment (asl1930, alr3234) or inhibit development (alr2902). Asl1930 and Alr3234 must also attenuate the activity of Alr2902. When only this homolog is present no heterocysts are formed, showing it inhibits development. Ectopic expression partially complements a hetP deletion. The sequence is that of HetP-like commitment protein Alr2902 from Nostoc sp. (strain PCC 7120 / SAG 25.82 / UTEX 2576).